The sequence spans 351 residues: C(7)-cyclitol 7-kinase (351 aa).

This sequence belongs to the ROK (NagC/XylR) family.

It carries out the reaction valienone + ATP = valienone 7-phosphate + ADP + H(+). The catalysed reaction is validone + ATP = validone 7-phosphate + ADP + H(+). Its function is as follows. Involved in the biosynthesis of the antifungal agent validamycin A. Catalyzes the phosphorylation of valienone and validone to their 7-phosphate derivatives. The polypeptide is C(7)-cyclitol 7-kinase (Streptomyces hygroscopicus subsp. limoneus).